A 248-amino-acid polypeptide reads, in one-letter code: Ribosomal RNA small subunit methyltransferase G (248 aa).

Residues Gly93, Leu98, 143-144 (AE), and Arg161 contribute to the S-adenosyl-L-methionine site.

The protein belongs to the methyltransferase superfamily. RNA methyltransferase RsmG family.

It is found in the cytoplasm. Functionally, specifically methylates the N7 position of guanine in position 518 of 16S rRNA. The sequence is that of Ribosomal RNA small subunit methyltransferase G from Mycobacterium leprae (strain Br4923).